We begin with the raw amino-acid sequence, 76 residues long: Brevinin-2ISa (76 aa).

An N-terminal signal peptide occupies residues 1–22; it reads MFNMKKSLLLLFFLGTISLSLC. Positions 23–41 are cleaved as a propeptide — removed in mature form; sequence EEERDADEDDGVEMTEEEV. Cysteines 70 and 76 form a disulfide.

Expressed by the skin glands.

It localises to the secreted. In terms of biological role, has antimicrobial activity against Gram-negative bacterium E.coli ATCC 8739 (MIC=50 ug), against Gram positive bacteria S.aureus ATCC 6538 (MIC=12.5 ug), methicillin-resistant S.aureus ATCC 43300 (MIC=100 ug) and B.subtilis ATCC 6633 (MIC=12.5 ug). Has no activity against fungus C.albicans ATCC 90028. The sequence is that of Brevinin-2ISa from Odorrana ishikawae (Ishikawa's frog).